The sequence spans 557 residues: Formate--tetrahydrofolate ligase (557 aa).

66–73 (TPAGEGKT) contributes to the ATP binding site.

The protein belongs to the formate--tetrahydrofolate ligase family.

The catalysed reaction is (6S)-5,6,7,8-tetrahydrofolate + formate + ATP = (6R)-10-formyltetrahydrofolate + ADP + phosphate. It functions in the pathway one-carbon metabolism; tetrahydrofolate interconversion. The chain is Formate--tetrahydrofolate ligase from Bartonella tribocorum (strain CIP 105476 / IBS 506).